The primary structure comprises 473 residues: MMTKVLGMAPVLGPRPPQEQVGPLMVKVEEKEEKGKYLPSLEMFRQRFRQFGYHDTPGPREALSQLRVLCCEWLRPEIHTKEQILELLVLEQFLTILPQELQAWVQEHCPESAEEAVTLLEDLERELDEPGHQVSTPPNEQKPVWEKISSSGTAKESPSSMQPQPLETSHKYESWGPLYIQESGEEQEFAQDPRKVRDCRLSTQHEESADEQKGSEAEGLKGDIISVIIANKPEASLERQCVNLENEKGTKPPLQEAGSKKGRESVPTKPTPGERRYICAECGKAFSNSSNLTKHRRTHTGEKPYVCTKCGKAFSHSSNLTLHYRTHLVDRPYDCKCGKAFGQSSDLLKHQRMHTEEAPYQCKDCGKAFSGKGSLIRHYRIHTGEKPYQCNECGKSFSQHAGLSSHQRLHTGEKPYKCKECGKAFNHSSNFNKHHRIHTGEKPYWCHHCGKTFCSKSNLSKHQRVHTGEGEAP.

A Glycyl lysine isopeptide (Lys-Gly) (interchain with G-Cter in SUMO2) cross-link involves residue lysine 27. An SCAN box domain is found at 45–127 (RQRFRQFGYH…TLLEDLEREL (83 aa)). The tract at residues 127–169 (LDEPGHQVSTPPNEQKPVWEKISSSGTAKESPSSMQPQPLETS) is disordered. The span at 148–167 (ISSSGTAKESPSSMQPQPLE) shows a compositional bias: polar residues. Glycyl lysine isopeptide (Lys-Gly) (interchain with G-Cter in SUMO2) cross-links involve residues lysine 221 and lysine 232. The tract at residues 244-272 (LENEKGTKPPLQEAGSKKGRESVPTKPTP) is disordered. Positions 258 to 272 (GSKKGRESVPTKPTP) are enriched in basic and acidic residues. 7 C2H2-type zinc fingers span residues 277–299 (YICAECGKAFSNSSNLTKHRRTH), 305–327 (YVCTKCGKAFSHSSNLTLHYRTH), 333–354 (YDCKCGKAFGQSSDLLKHQRMH), 360–382 (YQCKDCGKAFSGKGSLIRHYRIH), 388–410 (YQCNECGKSFSQHAGLSSHQRLH), 416–438 (YKCKECGKAFNHSSNFNKHHRIH), and 444–466 (YWCHHCGKTFCSKSNLSKHQRVH). A Glycyl lysine isopeptide (Lys-Gly) (interchain with G-Cter in SUMO2) cross-link involves residue lysine 349.

This sequence belongs to the krueppel C2H2-type zinc-finger protein family.

It localises to the nucleus. Its function is as follows. Strong transcriptional activator. Plays an important role in spermatogenesis; essential for the progression of meiotic prophase I in spermatocytes. In Homo sapiens (Human), this protein is Zinc finger and SCAN domain-containing protein 21 (ZSCAN21).